A 33-amino-acid polypeptide reads, in one-letter code: Defensin-1 (33 aa).

Intrachain disulfides connect Cys4–Cys32, Cys6–Cys21, and Cys11–Cys31.

The protein belongs to the alpha-defensin family.

The protein resides in the secreted. Functionally, has antibacterial activity against the Gram-negative bacterium E.coli and the Gram-positive bacteria L.monocytogenes and S.aureus. Has antifungal activity against C.albicans. The protein is Defensin-1 of Papio hamadryas (Hamadryas baboon).